The following is an 802-amino-acid chain: Cell division cycle 5-like protein (802 aa).

2 consecutive HTH myb-type domains span residues 1–56 (MPRI…WLDP) and 57–108 (SIKK…DKAA). 2 consecutive DNA-binding regions (H-T-H motif) follow at residues 31-54 (WSRIASLLHRKSAKQCKARWYEWL) and 82-104 (WRTIAPIIGRTAAQCLEHYEFLL). The interval 108–143 (AQRDNEEETTDDPRKLKPGEIDPNPETKPARPDPID) is disordered. Positions 118–127 (DDPRKLKPGE) are enriched in basic and acidic residues. Lysine 135 is covalently cross-linked (Glycyl lysine isopeptide (Lys-Gly) (interchain with G-Cter in SUMO2)). A coiled-coil region spans residues 142–245 (IDMDEDELEM…DADFRKLRQQ (104 aa)). Residues 165-271 (KKAKRKAREK…KDKQHLKRKK (107 aa)) carry the Nuclear localization signal motif. The segment at 200 to 206 (KKRKKKR) is required for interaction with CTNNBL1. Lysine 219 participates in a covalent cross-link: Glycyl lysine isopeptide (Lys-Gly) (interchain with G-Cter in SUMO2). Phosphothreonine is present on threonine 227. A compositionally biased stretch (basic and acidic residues) spans 246-262 (DLDGELRSEKEGRDRKK). Positions 246-278 (DLDGELRSEKEGRDRKKDKQHLKRKKESDLPSA) are disordered. Positions 260-606 (RKKDKQHLKR…NKKGKTVGFG (347 aa)) are interaction with PPP1R8. Residues serine 303 and serine 358 each carry the phosphoserine modification. Phosphothreonine occurs at positions 377, 385, 396, 404, 411, and 415. The span at 409–418 (LSTPFRTPSH) shows a compositional bias: polar residues. A disordered region spans residues 409–459 (LSTPFRTPSHGSEGLTPRSGTTPKPVINSTPGRTPLRDKLNINPEDGMADY). Serine 417 carries the phosphoserine modification. 2 positions are modified to phosphothreonine: threonine 424 and threonine 430. The segment covering 426–440 (RSGTTPKPVINSTPG) has biased composition (polar residues). A Phosphoserine modification is found at serine 437. Residues threonine 438 and threonine 442 each carry the phosphothreonine modification. A Glycyl lysine isopeptide (Lys-Gly) (interchain with G-Cter in SUMO2) cross-link involves residue lysine 487. The segment at 501–659 (ELEEREIDDT…GELSSEAYNQ (159 aa)) is interaction with DAPK3. 2 coiled-coil regions span residues 676 to 701 (RYTRANLASKKDRIESLEKRLEINRG) and 764 to 802 (PRRLECLKEDVQRQQEREKELQHRYADLLLEKETLKAKF). The tract at residues 706–800 (EAKRAAKMEK…LLLEKETLKA (95 aa)) is interaction with PLRG1.

It belongs to the CEF1 family. In terms of assembly, homodimer. Interacts with DAPK3. Component of the precatalytic, catalytic and postcatalytic spliceosome complexes. Part of a spliceosomal 'core' complex consisting of CDC5L, PLRG1, SPF27, CCAP1, CCAP3 and CCAP6. Interacts with PLRG1, Lodestar/TTF2, and NIPP1/PPP1R8. Component of the minor spliceosome, which splices U12-type introns. Within this complex, interacts with SCNM1. Component of the PRP19-CDC5L splicing complex composed of a core complex comprising a homotetramer of PRPF19, CDC5L, PLRG1 and BCAS2, and at least three less stably associated proteins CTNNBL1, CWC15 and HSPA8. Interacts (via its C-terminus) directly in the complex with PRPF19 and BCAS2. Interacts (via its C-terminus) directly with PRGL1 (via its WD40 repeat domain); the interaction is required for mRNA splicing but not for spliceosome assembly. Also interacts with CTNNBL1. Interacts with PRPF19 (via N-terminus). Interacts with USB1. Interacts with DDX41. Phosphorylated on serine and threonine residues. Phosphorylation on Thr-411 and Thr-438 is required for CDC5L-mediated mRNA splicing. Has no effect on subcellular location nor on homodimerization. Phosphorylated in vitro by CDK2. Phosphorylation enhances interaction with PPP1R8.

It localises to the nucleus. Its subcellular location is the nucleus speckle. It is found in the cytoplasm. In terms of biological role, DNA-binding protein involved in cell cycle control. May act as a transcription activator. Plays a role in pre-mRNA splicing as core component of precatalytic, catalytic and postcatalytic spliceosomal complexes. Component of the PRP19-CDC5L complex that forms an integral part of the spliceosome and is required for activating pre-mRNA splicing. The PRP19-CDC5L complex may also play a role in the response to DNA damage (DDR). As a component of the minor spliceosome, involved in the splicing of U12-type introns in pre-mRNAs. The protein is Cell division cycle 5-like protein (CDC5L) of Bos taurus (Bovine).